The following is a 440-amino-acid chain: Streptokinase (440 aa).

A signal peptide spans 1-26 (MKNYLSFGMFALLFALTFGTVKPVQA). The tract at residues 72–94 (PAQGGKTEQGLRPKSKPLATDKG) is disordered.

In terms of biological role, this protein is not a protease, but it activates plasminogen by complexing with it. As a potential virulence factor, it is thought to prevent the formation of effective fibrin barriers around the site of infection, thereby contributing to the invasiveness of the cells. The chain is Streptokinase (ska) from Streptococcus pyogenes.